The primary structure comprises 175 residues: MGARRLRVRSQRSRDSSVPTQCNQTECFDPLVRNCVSCELFHTPDTGHTSSLEPGTALQPQEGSALRPDVALLVGAPALLGLILALTLVGLVSLVSWRWRQQLRTASPDTSEGVQQESLENVFVPSSETPHASAPTWPPLKEDADSALPRHSVPVPATELGSTELVTTKTAGPEQ.

Residues 1-71 are Extracellular-facing; sequence MGARRLRVRS…EGSALRPDVA (71 aa). A TNFR-Cys; truncated repeat occupies 21–38; the sequence is QCNQTECFDPLVRNCVSC. Disulfide bonds link C22–C35 and C27–C38. N23 carries N-linked (GlcNAc...) asparagine glycosylation. An essential for TNFSF13B/TALL1/BAFF/BLyS binding region spans residues 29–34; sequence DPLVRN. A helical; Signal-anchor for type III membrane protein membrane pass occupies residues 72–92; it reads LLVGAPALLGLILALTLVGLV. Residues 93-175 are Cytoplasmic-facing; that stretch reads SLVSWRWRQQ…VTTKTAGPEQ (83 aa). A disordered region spans residues 124–175; it reads VPSSETPHASAPTWPPLKEDADSALPRHSVPVPATELGSTELVTTKTAGPEQ. Residues 160–175 are compositionally biased toward polar residues; the sequence is LGSTELVTTKTAGPEQ.

As to expression, highly expressed in spleen and testis; detected at lower levels in lung and thymus.

It is found in the membrane. Functionally, B-cell receptor specific for TNFSF13B/TALL1/BAFF/BLyS. Promotes the survival of mature B-cells and the B-cell response. The protein is Tumor necrosis factor receptor superfamily member 13C (Tnfrsf13c) of Mus musculus (Mouse).